Here is a 380-residue protein sequence, read N- to C-terminus: DNA primase small subunit PriS (380 aa).

Active-site residues include Asp-103, Asp-105, and Asp-284.

It belongs to the eukaryotic-type primase small subunit family. Heterodimer of a small subunit (PriS) and a large subunit (PriL). The cofactor is Mg(2+). It depends on Mn(2+) as a cofactor.

In terms of biological role, catalytic subunit of DNA primase, an RNA polymerase that catalyzes the synthesis of short RNA molecules used as primers for DNA polymerase during DNA replication. The small subunit contains the primase catalytic core and has DNA synthesis activity on its own. Binding to the large subunit stabilizes and modulates the activity, increasing the rate of DNA synthesis while decreasing the length of the DNA fragments, and conferring RNA synthesis capability. The DNA polymerase activity may enable DNA primase to also catalyze primer extension after primer synthesis. May also play a role in DNA repair. This Methanocorpusculum labreanum (strain ATCC 43576 / DSM 4855 / Z) protein is DNA primase small subunit PriS.